A 163-amino-acid polypeptide reads, in one-letter code: Cyclic pyranopterin monophosphate synthase (163 aa).

Substrate is bound by residues 79–81 and 118–119; these read LCH and ME. The active site involves Asp133.

The protein belongs to the MoaC family. Homohexamer; trimer of dimers.

The enzyme catalyses (8S)-3',8-cyclo-7,8-dihydroguanosine 5'-triphosphate = cyclic pyranopterin phosphate + diphosphate. It functions in the pathway cofactor biosynthesis; molybdopterin biosynthesis. Its function is as follows. Catalyzes the conversion of (8S)-3',8-cyclo-7,8-dihydroguanosine 5'-triphosphate to cyclic pyranopterin monophosphate (cPMP). This is Cyclic pyranopterin monophosphate synthase from Nocardioides sp. (strain ATCC BAA-499 / JS614).